The chain runs to 213 residues: Probable glutathione S-transferase DHAR1, cytosolic (213 aa).

Residues lysine 8 and aspartate 19 each contribute to the glutathione site. Lysine 8 and aspartate 19 together coordinate L-ascorbate. The GST N-terminal domain maps to 10–89 (AVGHPDTLGD…VIEEKYPTPS (80 aa)). The active-site Nucleophile is the cysteine 20. Residues lysine 47, valine 60, serine 74, histidine 160, and tryptophan 207 each contribute to the glutathione site. Residues 73–213 (DSDVITQVIE…IAGWAPKVNA (141 aa)) form the GST C-terminal domain. Position 210 (lysine 210) interacts with L-ascorbate.

The protein belongs to the GST superfamily. DHAR family. As to quaternary structure, monomer.

The protein resides in the cytoplasm. The protein localises to the cytosol. It catalyses the reaction RX + glutathione = an S-substituted glutathione + a halide anion + H(+). The enzyme catalyses L-dehydroascorbate + 2 glutathione = glutathione disulfide + L-ascorbate. Its function is as follows. Involved in ascorbate homeostasis. Maintains redox pools of ascorbate by recycling dihydroascorbate (DHA) to ascorbate. Involved in scavenging reactive oxygen species (ROS) under oxidative stresses. Possesses dehydroascorbate reductase (DHAR) activity in vitro. May function via a ping-pong reaction mechanism with an electron transfer at the active site. Possesses chaperone-like activity in vitro. This chain is Probable glutathione S-transferase DHAR1, cytosolic, found in Oryza sativa subsp. japonica (Rice).